The chain runs to 130 residues: Small ribosomal subunit protein uS9 (130 aa).

This sequence belongs to the universal ribosomal protein uS9 family.

This chain is Small ribosomal subunit protein uS9, found in Syntrophobacter fumaroxidans (strain DSM 10017 / MPOB).